The chain runs to 93 residues: Integration host factor subunit beta (93 aa).

This sequence belongs to the bacterial histone-like protein family. In terms of assembly, heterodimer of an alpha and a beta chain.

This protein is one of the two subunits of integration host factor, a specific DNA-binding protein that functions in genetic recombination as well as in transcriptional and translational control. The polypeptide is Integration host factor subunit beta (Rhodospirillum centenum (strain ATCC 51521 / SW)).